A 409-amino-acid chain; its full sequence is Translation initiation factor 2 subunit gamma (409 aa).

The tr-type G domain occupies 7–203; that stretch reads QPEVNIGLVG…AIEREIPTPE (197 aa). Residues 16–23 are G1; sequence GHVDHGKT. Positions 19, 23, 44, and 46 each coordinate Mg(2+). Residue 19–24 participates in GTP binding; it reads DHGKTT. The segment at 44–48 is G2; it reads GISIR. The tract at residues 90–93 is G3; that stretch reads DAPG. GTP-binding positions include 146-149 and 181-183; these read NKID and SAQ. A G4 region spans residues 146-149; sequence NKID. The G5 stretch occupies residues 181 to 183; that stretch reads SAQ.

This sequence belongs to the TRAFAC class translation factor GTPase superfamily. Classic translation factor GTPase family. EIF2G subfamily. Heterotrimer composed of an alpha, a beta and a gamma chain. Requires Mg(2+) as cofactor.

The catalysed reaction is GTP + H2O = GDP + phosphate + H(+). EIF-2 functions in the early steps of protein synthesis by forming a ternary complex with GTP and initiator tRNA. This chain is Translation initiation factor 2 subunit gamma, found in Haloquadratum walsbyi (strain DSM 16790 / HBSQ001).